A 613-amino-acid polypeptide reads, in one-letter code: Zinc metalloproteinase-disintegrin-like MTP4 (613 aa).

The signal sequence occupies residues 1 to 20; the sequence is MIEVLLVTICFTVFPYQGSS. The propeptide occupies 21–191; sequence IILESGNVND…DEPIEKISQL (171 aa). A Peptidase M12B domain is found at 205 to 401; that stretch reads KYIELYVVVD…VRPQCILNKP (197 aa). Glu208 is a binding site for Ca(2+). N-linked (GlcNAc...) asparagine glycosylation occurs at Asn282. Asp292 is a binding site for Ca(2+). Disulfide bonds link Cys316/Cys396, Cys356/Cys380, and Cys358/Cys363. Residues His341, His345, and His351 each coordinate Zn(2+). Ca(2+) contacts are provided by Cys396, Asn399, Asn414, Phe416, Glu418, Glu421, and Asp424. Positions 409 to 495 constitute a Disintegrin domain; that stretch reads PPVCGNYFVE…KCPTDSFQRN (87 aa). 15 disulfide bridges follow: Cys412–Cys441, Cys423–Cys436, Cys425–Cys431, Cys435–Cys458, Cys449–Cys455, Cys454–Cys480, Cys467–Cys487, Cys474–Cys506, Cys499–Cys511, Cys518–Cys568, Cys533–Cys575, Cys543–Cys577, Cys546–Cys556, Cys563–Cys601, and Cys595–Cys606. The N-linked (GlcNAc...) asparagine glycan is linked to Asn437. Positions 473–475 match the D/ECD-tripeptide motif; that stretch reads DCD. Ca(2+) is bound by residues Asp475, Leu476, Glu478, and Asp490. Residues 561–574 form a hypervariable region that may play important roles toward cell migration region; the sequence is KMCGKLLCEKGNAT. Asn572 is a glycosylation site (N-linked (GlcNAc...) asparagine).

Belongs to the venom metalloproteinase (M12B) family. P-III subfamily. As to quaternary structure, monomer. Requires Zn(2+) as cofactor. Expressed by the venom gland.

It localises to the secreted. Functionally, snake venom zinc metalloproteinase that may impair hemostasis in the prey. In Drysdalia coronoides (White-lipped snake), this protein is Zinc metalloproteinase-disintegrin-like MTP4.